We begin with the raw amino-acid sequence, 112 residues long: UPF0145 protein MmarC6_1828 (112 aa).

It belongs to the UPF0145 family.

The sequence is that of UPF0145 protein MmarC6_1828 from Methanococcus maripaludis (strain C6 / ATCC BAA-1332).